A 132-amino-acid polypeptide reads, in one-letter code: DNA-directed RNA polymerase subunit omega (132 aa).

Positions 90-109 (SSEAGGVLGTSSEEEGSSFD) are disordered.

Belongs to the RNA polymerase subunit omega family. As to quaternary structure, the RNAP catalytic core consists of 2 alpha, 1 beta, 1 beta' and 1 omega subunit. When a sigma factor is associated with the core the holoenzyme is formed, which can initiate transcription.

The catalysed reaction is RNA(n) + a ribonucleoside 5'-triphosphate = RNA(n+1) + diphosphate. Promotes RNA polymerase assembly. Latches the N- and C-terminal regions of the beta' subunit thereby facilitating its interaction with the beta and alpha subunits. This chain is DNA-directed RNA polymerase subunit omega, found in Bartonella henselae (strain ATCC 49882 / DSM 28221 / CCUG 30454 / Houston 1) (Rochalimaea henselae).